The following is a 465-amino-acid chain: ATP synthase subunit beta (465 aa).

148 to 155 (GGAGVGKT) lines the ATP pocket.

This sequence belongs to the ATPase alpha/beta chains family. F-type ATPases have 2 components, CF(1) - the catalytic core - and CF(0) - the membrane proton channel. CF(1) has five subunits: alpha(3), beta(3), gamma(1), delta(1), epsilon(1). CF(0) has three main subunits: a(1), b(2) and c(9-12). The alpha and beta chains form an alternating ring which encloses part of the gamma chain. CF(1) is attached to CF(0) by a central stalk formed by the gamma and epsilon chains, while a peripheral stalk is formed by the delta and b chains.

Its subcellular location is the cell inner membrane. The enzyme catalyses ATP + H2O + 4 H(+)(in) = ADP + phosphate + 5 H(+)(out). Produces ATP from ADP in the presence of a proton gradient across the membrane. The catalytic sites are hosted primarily by the beta subunits. In Neisseria meningitidis serogroup A / serotype 4A (strain DSM 15465 / Z2491), this protein is ATP synthase subunit beta.